The chain runs to 318 residues: Protein-methionine-sulfoxide reductase catalytic subunit MsrP (318 aa).

The segment at residues 1 to 40 (MNRFTRYDVTPEAIFNQRRQIIKAMGLGAAALSLPNIGFA) is a signal peptide (tat-type signal). Mo-molybdopterin is bound by residues Asn-72, 75–76 (YE), Cys-130, Thr-165, Asn-217, Arg-222, and 233–235 (SIK).

The protein belongs to the MsrP family. In terms of assembly, heterodimer of a catalytic subunit (MsrP) and a heme-binding subunit (MsrQ). It depends on Mo-molybdopterin as a cofactor. Predicted to be exported by the Tat system. The position of the signal peptide cleavage has not been experimentally proven.

The protein resides in the periplasm. It catalyses the reaction L-methionyl-[protein] + a quinone + H2O = L-methionyl-(S)-S-oxide-[protein] + a quinol. The catalysed reaction is L-methionyl-[protein] + a quinone + H2O = L-methionyl-(R)-S-oxide-[protein] + a quinol. Part of the MsrPQ system that repairs oxidized periplasmic proteins containing methionine sulfoxide residues (Met-O), using respiratory chain electrons. Thus protects these proteins from oxidative-stress damage caused by reactive species of oxygen and chlorine generated by the host defense mechanisms. MsrPQ is essential for the maintenance of envelope integrity under bleach stress, rescuing a wide series of structurally unrelated periplasmic proteins from methionine oxidation. The catalytic subunit MsrP is non-stereospecific, being able to reduce both (R-) and (S-) diastereoisomers of methionine sulfoxide. The polypeptide is Protein-methionine-sulfoxide reductase catalytic subunit MsrP (Actinobacillus pleuropneumoniae serotype 5b (strain L20)).